A 261-amino-acid polypeptide reads, in one-letter code: Imidazole glycerol phosphate synthase subunit HisF (261 aa).

Active-site residues include D16 and D135.

Belongs to the HisA/HisF family. In terms of assembly, heterodimer of HisH and HisF.

The protein resides in the cytoplasm. It catalyses the reaction 5-[(5-phospho-1-deoxy-D-ribulos-1-ylimino)methylamino]-1-(5-phospho-beta-D-ribosyl)imidazole-4-carboxamide + L-glutamine = D-erythro-1-(imidazol-4-yl)glycerol 3-phosphate + 5-amino-1-(5-phospho-beta-D-ribosyl)imidazole-4-carboxamide + L-glutamate + H(+). Its pathway is amino-acid biosynthesis; L-histidine biosynthesis; L-histidine from 5-phospho-alpha-D-ribose 1-diphosphate: step 5/9. Its function is as follows. IGPS catalyzes the conversion of PRFAR and glutamine to IGP, AICAR and glutamate. The HisF subunit catalyzes the cyclization activity that produces IGP and AICAR from PRFAR using the ammonia provided by the HisH subunit. This Mycolicibacterium gilvum (strain PYR-GCK) (Mycobacterium gilvum (strain PYR-GCK)) protein is Imidazole glycerol phosphate synthase subunit HisF.